Here is a 248-residue protein sequence, read N- to C-terminus: 2,3-bisphosphoglycerate-dependent phosphoglycerate mutase (248 aa).

Substrate-binding positions include 8–15, 21–22, R60, 87–90, K98, 114–115, and 183–184; these read RHGESTWN, TG, ERHY, RR, and GN. H9 serves as the catalytic Tele-phosphohistidine intermediate. E87 serves as the catalytic Proton donor/acceptor.

The protein belongs to the phosphoglycerate mutase family. BPG-dependent PGAM subfamily. Homodimer.

It carries out the reaction (2R)-2-phosphoglycerate = (2R)-3-phosphoglycerate. Its pathway is carbohydrate degradation; glycolysis; pyruvate from D-glyceraldehyde 3-phosphate: step 3/5. In terms of biological role, catalyzes the interconversion of 2-phosphoglycerate and 3-phosphoglycerate. This chain is 2,3-bisphosphoglycerate-dependent phosphoglycerate mutase, found in Burkholderia lata (strain ATCC 17760 / DSM 23089 / LMG 22485 / NCIMB 9086 / R18194 / 383).